Here is a 30-residue protein sequence, read N- to C-terminus: Photosystem I reaction center subunit XII (30 aa).

The helical transmembrane segment at I7 to K26 threads the bilayer.

This sequence belongs to the PsaM family.

Its subcellular location is the plastid. The protein localises to the chloroplast thylakoid membrane. This Porphyra purpurea (Red seaweed) protein is Photosystem I reaction center subunit XII.